The following is a 370-amino-acid chain: Anhydro-N-acetylmuramic acid kinase (370 aa).

12–19 (GTSLDGVD) contributes to the ATP binding site.

Belongs to the anhydro-N-acetylmuramic acid kinase family.

It catalyses the reaction 1,6-anhydro-N-acetyl-beta-muramate + ATP + H2O = N-acetyl-D-muramate 6-phosphate + ADP + H(+). It participates in amino-sugar metabolism; 1,6-anhydro-N-acetylmuramate degradation. Its pathway is cell wall biogenesis; peptidoglycan recycling. Its function is as follows. Catalyzes the specific phosphorylation of 1,6-anhydro-N-acetylmuramic acid (anhMurNAc) with the simultaneous cleavage of the 1,6-anhydro ring, generating MurNAc-6-P. Is required for the utilization of anhMurNAc either imported from the medium or derived from its own cell wall murein, and thus plays a role in cell wall recycling. The sequence is that of Anhydro-N-acetylmuramic acid kinase from Pectobacterium atrosepticum (strain SCRI 1043 / ATCC BAA-672) (Erwinia carotovora subsp. atroseptica).